The chain runs to 152 residues: Ribosome maturation factor RimP (152 aa).

It belongs to the RimP family.

Its subcellular location is the cytoplasm. Required for maturation of 30S ribosomal subunits. The protein is Ribosome maturation factor RimP of Salmonella arizonae (strain ATCC BAA-731 / CDC346-86 / RSK2980).